We begin with the raw amino-acid sequence, 256 residues long: Myeloblastin (256 aa).

The signal sequence occupies residues 1-25 (MAHRPPSPALASVLLALLLSGAARA). The propeptide occupies 26–27 (AE). The region spanning 28-248 (IVGGHEAQPH…YVDWIRSTLR (221 aa)) is the Peptidase S1 domain. C56 and C72 are oxidised to a cystine. Catalysis depends on charge relay system residues H71 and D118. N-linked (GlcNAc...) asparagine glycans are attached at residues N129 and N174. 3 disulfides stabilise this stretch: C152–C209, C182–C188, and C199–C224. The Charge relay system role is filled by S203. Residues 249–256 (RVEAKGRP) constitute a propeptide that is removed on maturation.

It belongs to the peptidase S1 family. Elastase subfamily. In terms of assembly, may form dimers. Interacts with CD177; the interaction tethers PRTN3 to the cell surface; the interaction is direct. Interacts with SERPINB1. Interacts with ADGRG3. In terms of tissue distribution, expressed in polymorphonuclear leukocytes (at protein level). Expressed in neutrophils (at protein level). Expressed in differentiating neutrophils.

The protein resides in the cytoplasmic granule. It localises to the secreted. Its subcellular location is the cell membrane. The protein localises to the membrane raft. The enzyme catalyses Hydrolysis of proteins, including elastin, by preferential cleavage: -Ala-|-Xaa- &gt; -Val-|-Xaa-.. Its activity is regulated as follows. Inhibited by phenylmethanesulfonyl fluoride (PMSF) and diisopropyl fluorophosphate (DFP). In terms of biological role, serine protease that degrades elastin, fibronectin, laminin, vitronectin, and collagen types I, III, and IV (in vitro). By cleaving and activating receptor F2RL1/PAR-2, enhances endothelial cell barrier function and thus vascular integrity during neutrophil transendothelial migration. Plays a role in neutrophil transendothelial migration, probably when associated with CD177. Triggers inflammatory processes in neutrophils by interacting with ADGRG3 upstream of F2RL1/PAR2 activation. This chain is Myeloblastin (PRTN3), found in Homo sapiens (Human).